Consider the following 318-residue polypeptide: NADH-ubiquinone oxidoreductase chain 1 (318 aa).

8 helical membrane-spanning segments follow: residues 2–22 (FMIN…FLTL), 68–88 (ITMF…MWTP), 100–120 (LGVL…LWSG), 146–166 (LAII…PALI), 171–191 (HMWL…STLA), 222–242 (LFFL…TILF), 253–273 (ELYT…FLWV), and 294–314 (LPLT…TAGI).

The protein belongs to the complex I subunit 1 family.

It is found in the mitochondrion inner membrane. It carries out the reaction a ubiquinone + NADH + 5 H(+)(in) = a ubiquinol + NAD(+) + 4 H(+)(out). Functionally, core subunit of the mitochondrial membrane respiratory chain NADH dehydrogenase (Complex I) that is believed to belong to the minimal assembly required for catalysis. Complex I functions in the transfer of electrons from NADH to the respiratory chain. The immediate electron acceptor for the enzyme is believed to be ubiquinone. In Coelops frithii (East Asian tailless leaf-nosed bat), this protein is NADH-ubiquinone oxidoreductase chain 1 (MT-ND1).